The primary structure comprises 514 residues: Flagellin B (514 aa).

This sequence belongs to the bacterial flagellin family. Heteromer of FlaA and FlaB. FlaB is located proximal to the hook while the remainder of the filament is composed of the predominant FlaA.

Its subcellular location is the secreted. It localises to the bacterial flagellum. In terms of biological role, flagellin is the subunit protein which polymerizes to form the filaments of bacterial flagella. Important for motility and virulence. This Helicobacter pylori (strain J99 / ATCC 700824) (Campylobacter pylori J99) protein is Flagellin B (flaB).